A 27-amino-acid polypeptide reads, in one-letter code: Small ribosomal subunit protein bTHX (27 aa).

Residues 1 to 13 (MGKGDRRTRRGKI) show a composition bias toward basic residues. The tract at residues 1-27 (MGKGDRRTRRGKIWRGTYGKYRPRKKK) is disordered.

Belongs to the bacterial ribosomal protein bTHX family. Part of the 30S ribosomal subunit.

Its function is as follows. Binds at the top of the head of the 30S subunit. It stabilizes a number of different RNA elements and thus is important for subunit structure. This Thermus aquaticus protein is Small ribosomal subunit protein bTHX (rpsU).